A 265-amino-acid polypeptide reads, in one-letter code: MTIQKILKMKNKEKIVMVTAYDAPTAKILEKAGVDIILVGDSLGNNVLGYDSTIPVTLEEMIIHLQAVRRGAPNSFIVADLPFLSYGYSIEESVKNAGLLIKNGANAVKIEGGAQNCEIIQKCLNIGIPVMGHIGFTPQSLNMFGGYKVQGKEESAKKKLLDNALALENCGVFSIVLEMVTESIAKEITEKLSIPTIGIGAGRYCDGQVLVFHDIVGLNPEFKPKFSKMYANTFEIMLNAIEKFKMEVKDKTFPSKENVFEEGGK.

Mg(2+)-binding residues include D41 and D80. 3-methyl-2-oxobutanoate is bound by residues 41–42 (DS), D80, and K109. E111 lines the Mg(2+) pocket. E178 (proton acceptor) is an active-site residue.

It belongs to the PanB family. In terms of assembly, homodecamer; pentamer of dimers. Mg(2+) is required as a cofactor.

The protein resides in the cytoplasm. The enzyme catalyses 3-methyl-2-oxobutanoate + (6R)-5,10-methylene-5,6,7,8-tetrahydrofolate + H2O = 2-dehydropantoate + (6S)-5,6,7,8-tetrahydrofolate. It functions in the pathway cofactor biosynthesis; (R)-pantothenate biosynthesis; (R)-pantoate from 3-methyl-2-oxobutanoate: step 1/2. Functionally, catalyzes the reversible reaction in which hydroxymethyl group from 5,10-methylenetetrahydrofolate is transferred onto alpha-ketoisovalerate to form ketopantoate. This Thermosipho africanus (strain TCF52B) protein is 3-methyl-2-oxobutanoate hydroxymethyltransferase.